Here is a 126-residue protein sequence, read N- to C-terminus: Small ribosomal subunit protein uS13 (126 aa).

A disordered region spans residues 98-126 (PVRGQSTKNNARTRKGRKKTVANKKKATK). Residues 108–126 (ARTRKGRKKTVANKKKATK) are compositionally biased toward basic residues.

This sequence belongs to the universal ribosomal protein uS13 family. Part of the 30S ribosomal subunit. Forms a loose heterodimer with protein S19. Forms two bridges to the 50S subunit in the 70S ribosome.

Located at the top of the head of the 30S subunit, it contacts several helices of the 16S rRNA. In the 70S ribosome it contacts the 23S rRNA (bridge B1a) and protein L5 of the 50S subunit (bridge B1b), connecting the 2 subunits; these bridges are implicated in subunit movement. Contacts the tRNAs in the A and P-sites. This is Small ribosomal subunit protein uS13 from Phocaeicola vulgatus (strain ATCC 8482 / DSM 1447 / JCM 5826 / CCUG 4940 / NBRC 14291 / NCTC 11154) (Bacteroides vulgatus).